Consider the following 236-residue polypeptide: Sugar fermentation stimulation protein homolog (236 aa).

Belongs to the SfsA family.

The polypeptide is Sugar fermentation stimulation protein homolog (Methylobacterium nodulans (strain LMG 21967 / CNCM I-2342 / ORS 2060)).